The sequence spans 100 residues: Urease subunit gamma (100 aa).

It belongs to the urease gamma subunit family. Heterotrimer of UreA (gamma), UreB (beta) and UreC (alpha) subunits. Three heterotrimers associate to form the active enzyme.

It is found in the cytoplasm. The catalysed reaction is urea + 2 H2O + H(+) = hydrogencarbonate + 2 NH4(+). It functions in the pathway nitrogen metabolism; urea degradation; CO(2) and NH(3) from urea (urease route): step 1/1. The chain is Urease subunit gamma from Prochlorococcus marinus (strain NATL1A).